A 317-amino-acid chain; its full sequence is Protein IMPACT-B (317 aa).

The region spanning 17–118 is the RWD domain; that stretch reads EEIEALSSIY…EKIREFLTEK (102 aa). Residues 296-317 are disordered; it reads DSTEETSKAGGKSKKPKSKKTK. The span at 306–317 shows a compositional bias: basic residues; that stretch reads GKSKKPKSKKTK.

It belongs to the IMPACT family. In terms of assembly, interacts with GCN1; prevents the interaction of GCN1 with EIF2AK4/GCN2 and inhibits EIF2AK4/GCN2 kinase activity. Interaction with RPL39; this interaction occurs in a GCN1-independent manner. Associates with ribosomes; this interaction occurs in a GCN1-independent manner. Associates with actin; this interaction occurs in a GCN1-independent manner.

It is found in the cytoplasm. In terms of biological role, translational regulator that ensures constant high levels of translation upon a variety of stress conditions, such as amino acid starvation, UV-C irradiation, proteasome inhibitor treatment and glucose deprivation. Plays a role as a negative regulator of the EIF2AK4/GCN2 kinase activity; impairs GCN1-mediated EIF2AK4/GCN2 activation, and hence EIF2AK4/GCN2-mediated eIF-2-alpha phosphorylation and subsequent down-regulation of protein synthesis. Plays a role in differentiation of neuronal cells by stimulating neurite outgrowth. This chain is Protein IMPACT-B (impact-B), found in Xenopus tropicalis (Western clawed frog).